A 160-amino-acid polypeptide reads, in one-letter code: Small ribosomal subunit protein uS19 (160 aa).

Residues M1–R27 form a disordered region.

It belongs to the universal ribosomal protein uS19 family.

In terms of biological role, protein S19 forms a complex with S13 that binds strongly to the 16S ribosomal RNA. In Methanococcus vannielii (strain ATCC 35089 / DSM 1224 / JCM 13029 / OCM 148 / SB), this protein is Small ribosomal subunit protein uS19.